The primary structure comprises 237 residues: Probable glutathione-independent glyoxalase SNO4 (237 aa).

Catalysis depends on residues Cys138, His139, and Glu170.

This sequence belongs to the peptidase C56 family. HSP31-like subfamily. As to quaternary structure, homodimer.

Its subcellular location is the cytoplasm. It is found in the P-body. The enzyme catalyses methylglyoxal + H2O = (R)-lactate + H(+). In terms of biological role, catalyzes the conversion of methylglyoxal (MG) to D-lactate in a single glutathione (GSH)-independent step. May play a role in detoxifying endogenously produced glyoxals. Involved in protection against reactive oxygen species (ROS). Important for viability in stationary phase. May negatively regulate TORC1 in response to nutrient limitation. This Saccharomyces cerevisiae (strain ATCC 204508 / S288c) (Baker's yeast) protein is Probable glutathione-independent glyoxalase SNO4.